The chain runs to 178 residues: ATP-dependent protease subunit HslV (178 aa).

The active site involves threonine 8. Glycine 163, cysteine 166, and threonine 169 together coordinate Na(+).

This sequence belongs to the peptidase T1B family. HslV subfamily. In terms of assembly, a double ring-shaped homohexamer of HslV is capped on each side by a ring-shaped HslU homohexamer. The assembly of the HslU/HslV complex is dependent on binding of ATP.

It is found in the cytoplasm. It carries out the reaction ATP-dependent cleavage of peptide bonds with broad specificity.. Allosterically activated by HslU binding. Protease subunit of a proteasome-like degradation complex believed to be a general protein degrading machinery. The chain is ATP-dependent protease subunit HslV from Treponema denticola (strain ATCC 35405 / DSM 14222 / CIP 103919 / JCM 8153 / KCTC 15104).